A 190-amino-acid chain; its full sequence is Cancer-related nucleoside-triphosphatase homolog (190 aa).

N-acetylalanine is present on Ala2. Residues 9–16 (GPPGVGKT) and 109–116 (ICVIDEVG) contribute to the ATP site. N6-acetyllysine is present on Lys165.

This sequence belongs to the THEP1 NTPase family. In terms of assembly, monomer.

It catalyses the reaction a ribonucleoside 5'-triphosphate + H2O = a ribonucleoside 5'-diphosphate + phosphate + H(+). It carries out the reaction 5-methyl-UTP + H2O = 5-methyl-UDP + phosphate + H(+). The enzyme catalyses CTP + H2O = CDP + phosphate + H(+). The catalysed reaction is ATP + H2O = ADP + phosphate + H(+). It catalyses the reaction GTP + H2O = GDP + phosphate + H(+). Has nucleotide phosphatase activity towards ATP, GTP, CTP, TTP and UTP. Hydrolyzes nucleoside diphosphates with lower efficiency. The sequence is that of Cancer-related nucleoside-triphosphatase homolog (NTPCR) from Bos taurus (Bovine).